The primary structure comprises 156 residues: Ribonuclease H (156 aa).

The RNase H type-1 domain occupies 2–144 (TMKNVQAFTD…CDVLARTQAS (143 aa)). 4 residues coordinate Mg(2+): Asp-11, Glu-49, Asp-71, and Asp-136.

It belongs to the RNase H family. Monomer. Mg(2+) is required as a cofactor.

The protein resides in the cytoplasm. It carries out the reaction Endonucleolytic cleavage to 5'-phosphomonoester.. Endonuclease that specifically degrades the RNA of RNA-DNA hybrids. The sequence is that of Ribonuclease H from Nitratidesulfovibrio vulgaris (strain DSM 19637 / Miyazaki F) (Desulfovibrio vulgaris).